The following is a 164-amino-acid chain: Phosphopantetheine adenylyltransferase (164 aa).

Residue Thr14 participates in substrate binding. ATP contacts are provided by residues 14–15 and His22; that span reads TF. Substrate is bound by residues Lys46, Leu78, and Arg92. ATP contacts are provided by residues 93–95, Glu103, and 128–134; these read GLR and HAFISST.

It belongs to the bacterial CoaD family. Homohexamer. Requires Mg(2+) as cofactor.

The protein resides in the cytoplasm. It carries out the reaction (R)-4'-phosphopantetheine + ATP + H(+) = 3'-dephospho-CoA + diphosphate. Its pathway is cofactor biosynthesis; coenzyme A biosynthesis; CoA from (R)-pantothenate: step 4/5. Reversibly transfers an adenylyl group from ATP to 4'-phosphopantetheine, yielding dephospho-CoA (dPCoA) and pyrophosphate. In Vibrio cholerae serotype O1 (strain ATCC 39541 / Classical Ogawa 395 / O395), this protein is Phosphopantetheine adenylyltransferase.